The primary structure comprises 228 residues: GrpE protein homolog, mitochondrial (228 aa).

A compositionally biased stretch (basic and acidic residues) spans 46-57 (DEAKSEESKENN). The interval 46-66 (DEAKSEESKENNEDLTEEQSE) is disordered.

Belongs to the GrpE family. In terms of assembly, component of the PAM complex, at least composed of SSC1 (mtHsp70), MGE1, TIM44, PAM16/TIM16, PAM17 and PAM18/TIM14. Interacts with SSQ1. In terms of processing, the N-terminus is blocked.

The protein localises to the mitochondrion matrix. Its function is as follows. Essential component of the PAM complex, a complex required for the translocation of transit peptide-containing proteins from the inner membrane into the mitochondrial matrix in an ATP-dependent manner. Seems to control the nucleotide-dependent binding of SSC1 to substrate proteins and the association of SSC1 with TIM44. The polypeptide is GrpE protein homolog, mitochondrial (MGE1) (Saccharomyces cerevisiae (strain ATCC 204508 / S288c) (Baker's yeast)).